The following is a 226-amino-acid chain: Ethylene-responsive transcription factor-like protein At4g13040 (226 aa).

Disordered stretches follow at residues 63–109 (EERS…RKRV) and 195–226 (KKPK…SDKM). Over residues 97-109 (PPKRRKQHRRKRV) the composition is skewed to basic residues. A DNA-binding region (AP2/ERF) is located at residues 105–171 (RRKRVHNQEP…REPNFELSEE (67 aa)). Positions 217–226 (EEEEQDSDKM) are enriched in acidic residues.

The protein belongs to the AP2/ERF transcription factor family.

It is found in the nucleus. In terms of biological role, probably acts as a transcriptional activator. Binds to the GCC-box pathogenesis-related promoter element. May be involved in the regulation of gene expression by stress factors and by components of stress signal transduction pathways. This chain is Ethylene-responsive transcription factor-like protein At4g13040, found in Arabidopsis thaliana (Mouse-ear cress).